The chain runs to 696 residues: DNA-directed RNA polymerase subunit beta' (696 aa).

Residues C70, C72, C85, and C88 each coordinate Zn(2+). Mg(2+) is bound by residues D540, D542, and D544.

It belongs to the RNA polymerase beta' chain family. RpoC1 subfamily. In terms of assembly, in plastids the minimal PEP RNA polymerase catalytic core is composed of four subunits: alpha, beta, beta', and beta''. When a (nuclear-encoded) sigma factor is associated with the core the holoenzyme is formed, which can initiate transcription. It depends on Mg(2+) as a cofactor. Requires Zn(2+) as cofactor.

The protein resides in the plastid. It is found in the chloroplast. The enzyme catalyses RNA(n) + a ribonucleoside 5'-triphosphate = RNA(n+1) + diphosphate. In terms of biological role, DNA-dependent RNA polymerase catalyzes the transcription of DNA into RNA using the four ribonucleoside triphosphates as substrates. The polypeptide is DNA-directed RNA polymerase subunit beta' (Phaeodactylum tricornutum (strain CCAP 1055/1)).